A 227-amino-acid polypeptide reads, in one-letter code: Transmembrane emp24 domain-containing protein 4 (227 aa).

Residues 1-29 form the signal peptide; it reads MAGVGVGPLQGMVRFGLLVLTVCAACARG. The Lumenal portion of the chain corresponds to 30–194; it reads LYFHIGETEK…RLTSESTNQR (165 aa). The GOLD domain maps to 39–137; the sequence is KRCFIEEIPD…KLRVHLDIQV (99 aa). Asn117 carries N-linked (GlcNAc...) asparagine glycosylation. Positions 147-176 form a coiled coil; that stretch reads IAAKDKLTELQLRARQLLDQVEQIQKEQDY. Residues 195-212 traverse the membrane as a helical segment; the sequence is VLWWSIAQTVILILTGIW. The Cytoplasmic portion of the chain corresponds to 213-227; that stretch reads QMRHLKSFFEAKKLV. A COPII vesicle coat-binding motif is present at residues 220–221; that stretch reads FF. The short motif at 220–227 is the COPI vesicle coat-binding element; sequence FFEAKKLV.

This sequence belongs to the EMP24/GP25L family.

Its subcellular location is the endoplasmic reticulum membrane. In terms of biological role, involved in vesicular protein trafficking, mainly in the early secretory pathway. Involved in the maintenance of the Golgi apparatus. Appears to play a role in the biosynthesis of secreted cargo including processing. Involved in endoplasmic reticulum stress response. May play a role in the regulation of heat-shock response and apoptosis. This Mus musculus (Mouse) protein is Transmembrane emp24 domain-containing protein 4 (Tmed4).